The primary structure comprises 314 residues: Taste receptor type 2 member 42 (314 aa).

The Extracellular segment spans residues 1–7; that stretch reads MPTELDK. A helical membrane pass occupies residues 8-28; it reads IFLILAIVEFIIGLLGNVFIG. Topologically, residues 29–50 are cytoplasmic; it reads LVNCSEGIKNQKVFSADFILTC. Residues 51–71 form a helical membrane-spanning segment; the sequence is LAISTIGQLLVILFDSFLVGL. Residues 72-101 are Extracellular-facing; sequence ASHLYTTYRLGKLVILLWHMTNHLTTWLAT. A helical membrane pass occupies residues 102–122; that stretch reads CLSIFYFFKIAHFPHSLFLWL. Residues 123-127 are Cytoplasmic-facing; that stretch reads RWRMN. The helical transmembrane segment at 128–148 threads the bilayer; sequence GMIVMLRTLSLFLLIFDSLVL. The Extracellular segment spans residues 149 to 187; that stretch reads KLFIDISLNIIDKSNLTLYFDESKTLYDKLSILKTLLSL. Asn163 carries an N-linked (GlcNAc...) asparagine glycan. The chain crosses the membrane as a helical span at residues 188 to 208; it reads TSFIPFSLSLTSLLFLFLSLV. Residues 209 to 238 are Cytoplasmic-facing; the sequence is RHTRNLKLSSLGSRDSSTEAHRRAMKMVMS. Residues 239 to 259 form a helical membrane-spanning segment; the sequence is FLFLFIVHFFSLQVANWIFFM. At 260-265 the chain is on the extracellular side; that stretch reads SWNNKY. The helical transmembrane segment at 266–286 threads the bilayer; sequence IKFVMLALNAFPSCHSFILIL. Residues 287 to 314 are Cytoplasmic-facing; that stretch reads GNSKLRQTAVRLLSHLRNYTKTSNPLPL.

Belongs to the G-protein coupled receptor T2R family.

It is found in the membrane. Receptor that may play a role in the perception of bitterness and is gustducin-linked. May play a role in sensing the chemical composition of the gastrointestinal content. The activity of this receptor may stimulate alpha gustducin, mediate PLC-beta-2 activation and lead to the gating of TRPM5. The sequence is that of Taste receptor type 2 member 42 (TAS2R42) from Pongo pygmaeus (Bornean orangutan).